Reading from the N-terminus, the 101-residue chain is Small ribosomal subunit protein bS18c (101 aa).

The disordered stretch occupies residues 82–101; the sequence is KQFERAESTPRTPGPRTRNK.

Belongs to the bacterial ribosomal protein bS18 family. In terms of assembly, part of the 30S ribosomal subunit.

The protein resides in the plastid. Its subcellular location is the chloroplast. The protein is Small ribosomal subunit protein bS18c of Platanus occidentalis (Sycamore).